Reading from the N-terminus, the 1042-residue chain is Aldehyde reductase lnaA (1042 aa).

Residues histidine 29–arginine 425 are adenylation (A) domain. The region spanning aspartate 532–isoleucine 609 is the Carrier domain. An O-(pantetheine 4'-phosphoryl)serine modification is found at serine 569. Residues leucine 655–valine 897 are short-chain dehydrogenase/reductase (R) domain.

The protein belongs to the NRP synthetase family.

It catalyses the reaction L-tyrosinal + AMP + diphosphate + NADP(+) = L-tyrosine + ATP + NADPH + H(+). It participates in secondary metabolite biosynthesis. Its function is as follows. Non-canonical nonribosomal peptide synthetase; part of the lna gene cluster that mediates the biosynthesis of diastereomeric piperazines. Lna and lnb clusters encode sets of enzymes that produce overlapping sets of previously undescribed metabolites such as piperazinomycin-like metabolites or morpholine. The lna and lnb biosynthetic pathways appear to be part of a signaling network that controls the formation of sclerotia, a resilient overwintering structure. One primary function of the non-canonical nonribosomal peptide synthetases lnaA and lnbA consists in the reduction of L-tyrosine. The presence in the clusters of tailoring enzymes such as the oxidoreductases lnaB, lnbB, lnaE or lnbE, as well as of the cytochrome P450 monooxygenases lnaC, lnaD, or lnbC, might explain formation of various diastereomeric piperazines. The polypeptide is Aldehyde reductase lnaA (Aspergillus flavus (strain ATCC 200026 / FGSC A1120 / IAM 13836 / NRRL 3357 / JCM 12722 / SRRC 167)).